The chain runs to 550 residues: MKSRLQAFKQFTRFVSCKSCGVELQSKNPSVTGYYKPPRAVRKDAGTIEDLKYLMFTQELQLKKHEIGLLDPDTDPDYKEPIPKRLVCKRCVDAISHNRYNSSDFPIHSFNDIKGALPHAANVYHVVSLSDFPLSLDKTILAEKNNRNYLLLSKADQITYKSSMLPHKGSAFFAEFCRRHIGVHVKKVVLFSNPRNWNIPSVINALAKRCYLLGNPNVGKTSLINSLLHEKSTSFQAQLDKRGNVIGPPKGHEQIQSTRRRAIFNEGGVSHIPNFTRTMQTYLIEDKVVNDLPGYTMDPTKVSDLANYIEKETLDNIRKTSKFKIDKLIKQNYTSLTGSKTGKCLSFGGIFHLVPPNSTINQVVNYIPLPEHEFSNVEKAVSLSLEVLQSENHSLRQFFALKKPFTDIKMFDRHVIPPFNGAIEIVLKDIGYFQVKPTGKYGFNGLYELWVPKGIRVCIREPLSKLISKSYEKYIESGDIADVCPTDRPLISDTYIMNHTEEDTFARMREMYINRTSKDILSRRLLQKDPNDIVGTLQSPPSNLYWYYKW.

The transit peptide at 1 to 43 (MKSRLQAFKQFTRFVSCKSCGVELQSKNPSVTGYYKPPRAVRK) directs the protein to the mitochondrion. One can recognise a CP-type G domain in the interval 107-298 (IHSFNDIKGA…VNDLPGYTMD (192 aa)).

It belongs to the TRAFAC class YlqF/YawG GTPase family. GEP3 subfamily.

The protein localises to the mitochondrion. May be involved in the mitochondrial lipid metabolism. In Kluyveromyces lactis (strain ATCC 8585 / CBS 2359 / DSM 70799 / NBRC 1267 / NRRL Y-1140 / WM37) (Yeast), this protein is Genetic interactor of prohibitins 3, mitochondrial (GEP3).